The sequence spans 229 residues: 5'-methylthioadenosine/S-adenosylhomocysteine nucleosidase (229 aa).

Catalysis depends on glutamate 12, which acts as the Proton acceptor. Substrate is bound by residues glycine 78, isoleucine 152, and 173 to 174 (ME). The active-site Proton donor is the aspartate 197.

Belongs to the PNP/UDP phosphorylase family. MtnN subfamily.

The catalysed reaction is S-adenosyl-L-homocysteine + H2O = S-(5-deoxy-D-ribos-5-yl)-L-homocysteine + adenine. The enzyme catalyses S-methyl-5'-thioadenosine + H2O = 5-(methylsulfanyl)-D-ribose + adenine. It catalyses the reaction 5'-deoxyadenosine + H2O = 5-deoxy-D-ribose + adenine. It functions in the pathway amino-acid biosynthesis; L-methionine biosynthesis via salvage pathway; S-methyl-5-thio-alpha-D-ribose 1-phosphate from S-methyl-5'-thioadenosine (hydrolase route): step 1/2. Its function is as follows. Catalyzes the irreversible cleavage of the glycosidic bond in both 5'-methylthioadenosine (MTA) and S-adenosylhomocysteine (SAH/AdoHcy) to adenine and the corresponding thioribose, 5'-methylthioribose and S-ribosylhomocysteine, respectively. Also cleaves 5'-deoxyadenosine, a toxic by-product of radical S-adenosylmethionine (SAM) enzymes, into 5-deoxyribose and adenine. The protein is 5'-methylthioadenosine/S-adenosylhomocysteine nucleosidase of Histophilus somni (strain 129Pt) (Haemophilus somnus).